The following is a 189-amino-acid chain: Orotate phosphoribosyltransferase (189 aa).

Residues Arg-94, Lys-95, Lys-98, and 120-128 (EDVTTTGGS) contribute to the 5-phospho-alpha-D-ribose 1-diphosphate site. Orotate contacts are provided by Thr-124 and Arg-152.

Belongs to the purine/pyrimidine phosphoribosyltransferase family. PyrE subfamily. Homodimer. Mg(2+) serves as cofactor.

The catalysed reaction is orotidine 5'-phosphate + diphosphate = orotate + 5-phospho-alpha-D-ribose 1-diphosphate. The protein operates within pyrimidine metabolism; UMP biosynthesis via de novo pathway; UMP from orotate: step 1/2. Catalyzes the transfer of a ribosyl phosphate group from 5-phosphoribose 1-diphosphate to orotate, leading to the formation of orotidine monophosphate (OMP). This is Orotate phosphoribosyltransferase from Thermococcus gammatolerans (strain DSM 15229 / JCM 11827 / EJ3).